A 274-amino-acid chain; its full sequence is Glucosamine-6-phosphate deaminase (274 aa).

Residue aspartate 72 is the Proton acceptor; for enolization step of the active site. Aspartate 141 functions as the For ring-opening step in the catalytic mechanism. Histidine 143 (proton acceptor; for ring-opening step) is an active-site residue. Glutamate 148 (for ring-opening step) is an active-site residue.

This sequence belongs to the glucosamine/galactosamine-6-phosphate isomerase family. As to quaternary structure, homohexamer.

Its subcellular location is the cytoplasm. The catalysed reaction is alpha-D-glucosamine 6-phosphate + H2O = beta-D-fructose 6-phosphate + NH4(+). It participates in nucleotide-sugar biosynthesis; UDP-N-acetyl-alpha-D-glucosamine biosynthesis; alpha-D-glucosamine 6-phosphate from D-fructose 6-phosphate: step 1/1. Its function is as follows. Catalyzes the reversible conversion of alpha-D-glucosamine 6-phosphate (GlcN-6P) into beta-D-fructose 6-phosphate (Fru-6P) and ammonium ion, a regulatory reaction step in de novo uridine diphosphate-N-acetyl-alpha-D-glucosamine (UDP-GlcNAc) biosynthesis via hexosamine pathway. The chain is Glucosamine-6-phosphate deaminase from Drosophila pseudoobscura pseudoobscura (Fruit fly).